Reading from the N-terminus, the 469-residue chain is 3-isopropylmalate dehydratase large subunit (469 aa).

[4Fe-4S] cluster contacts are provided by C350, C410, and C413.

It belongs to the aconitase/IPM isomerase family. LeuC type 1 subfamily. As to quaternary structure, heterodimer of LeuC and LeuD. [4Fe-4S] cluster is required as a cofactor.

The enzyme catalyses (2R,3S)-3-isopropylmalate = (2S)-2-isopropylmalate. The protein operates within amino-acid biosynthesis; L-leucine biosynthesis; L-leucine from 3-methyl-2-oxobutanoate: step 2/4. Its function is as follows. Catalyzes the isomerization between 2-isopropylmalate and 3-isopropylmalate, via the formation of 2-isopropylmaleate. The chain is 3-isopropylmalate dehydratase large subunit from Rhodopseudomonas palustris (strain TIE-1).